A 497-amino-acid chain; its full sequence is MPSVKLTHHSPPDTIASDSVRLLSRETLRISASLASPPVDDLPPHSPPPPDSQFLHSTLRLICCEEIDGRRFKYVAESDGSGRFKKNSVRAISLESPQTPFDEVGSFLRSYVVPEGFPGSVNESYVPYMTWRALKHFFGGAMGVFTTQTLLNSVGASRNSSASAAVAINWILKDGAGRVGKMLFARQGKKFDYDLKQLRFAGDLLMELGAGVELATAAVPHLFLPLACAANVVKNVAAVTSTSTRTPIYKAFAKGENIGDVTAKGECVGNIADLMGTGFSILISKRNPSLVTTFGLLSCGYLMSSYQEVRSVVLHTLNRARFTVAVESFLKTGRVPSLQEGNIQEKIFTFPWVDDRPVMLGARFKDAFQDPSTYMAVKPFFDKERYMVTYSPTKGKVYALLKHQANSDDILKAAFHAHVLLHFMNQSKDGNPRSVEQLDPAFAPTEYELESRIAESCEMVSTSYGVFKSRAAEQGWRMSESLLNPGRARLCHVKEGE.

This sequence belongs to the RUS1 family.

Required for normal embryo development. This is Protein root UVB sensitive 6 from Arabidopsis thaliana (Mouse-ear cress).